Here is a 405-residue protein sequence, read N- to C-terminus: Prostaglandin E2 receptor EP1 subtype (405 aa).

Residues 1–39 (MSPYGLNLSLVDEATTCVTPRVPNTSVVLPTGGNGTSPA) lie on the Extracellular side of the membrane. N-linked (GlcNAc...) asparagine glycosylation is found at Asn7, Asn24, and Asn34. A helical transmembrane segment spans residues 40–62 (LPIFSMTLGAVSNVLALALLAQV). Residues 63–80 (AGRLRRRRSTATFLLFVA) are Cytoplasmic-facing. The helical transmembrane segment at 81-99 (SLLAIDLAGHVIPGALVLR) threads the bilayer. Over 100 to 113 (LYTAGRAPAGGACH) the chain is Extracellular. Cys112 and Cys190 are disulfide-bonded. Residues 114–135 (FLGGCMVFFGLCPLLLGCGMAV) form a helical membrane-spanning segment. Residues 136-157 (ERCVGVTQPLIHAARVSVARAR) are Cytoplasmic-facing. A helical membrane pass occupies residues 158–179 (LALALLAAMALAVALLPLVHVG). The Extracellular portion of the chain corresponds to 180-202 (HYELQYPGTWCFISLGPPGGWRQ). A helical transmembrane segment spans residues 203–228 (ALLAGLFAGLGLAALLAALVCNTLSG). The Cytoplasmic portion of the chain corresponds to 229–301 (LALLRARWRR…HAHDVEMVGQ (73 aa)). A helical transmembrane segment spans residues 302–323 (LVGIMVVSCICWSPLLVLVVLA). Residues 324 to 337 (IGGWNSNSLQRPLF) lie on the Extracellular side of the membrane. Residues 338-357 (LAVRLASWNQILDPWVYILL) form a helical membrane-spanning segment. Residues 358 to 405 (RQAMLRQLLRLLPLRVSAKGGPTELSLTKSAWEASSLRSSRHSGFSHL) are Cytoplasmic-facing.

Belongs to the G-protein coupled receptor 1 family. Phosphorylated. In terms of tissue distribution, highly abundant in kidney and lung. Found in a lesser extent in spleen, colon, and thymus. Also expressed in uterine myometrium and endometrium.

Its subcellular location is the cell membrane. Functionally, receptor for prostaglandin E2 (PGE2). The activity of this receptor is mediated by G(q) proteins which activate a phosphatidylinositol-calcium second messenger system. May play a role as an important modulator of renal function. Implicated the smooth muscle contractile response to PGE2 in various tissues. Isoform 1 and isoform 2 have identical ligand binding properties, but isoform 2 lacks coupling to calcium mobilization and may therefore attenuate the action of PGE2 on tissues. This Rattus norvegicus (Rat) protein is Prostaglandin E2 receptor EP1 subtype (Ptger1).